A 119-amino-acid chain; its full sequence is Large ribosomal subunit protein bL20 (119 aa).

The protein belongs to the bacterial ribosomal protein bL20 family.

In terms of biological role, binds directly to 23S ribosomal RNA and is necessary for the in vitro assembly process of the 50S ribosomal subunit. It is not involved in the protein synthesizing functions of that subunit. This chain is Large ribosomal subunit protein bL20, found in Thiobacillus denitrificans (strain ATCC 25259 / T1).